Reading from the N-terminus, the 348-residue chain is Phosphoribosylformylglycinamidine cyclo-ligase (348 aa).

It belongs to the AIR synthase family.

The protein resides in the cytoplasm. It catalyses the reaction 2-formamido-N(1)-(5-O-phospho-beta-D-ribosyl)acetamidine + ATP = 5-amino-1-(5-phospho-beta-D-ribosyl)imidazole + ADP + phosphate + H(+). Its pathway is purine metabolism; IMP biosynthesis via de novo pathway; 5-amino-1-(5-phospho-D-ribosyl)imidazole from N(2)-formyl-N(1)-(5-phospho-D-ribosyl)glycinamide: step 2/2. In Cereibacter sphaeroides (strain ATCC 17025 / ATH 2.4.3) (Rhodobacter sphaeroides), this protein is Phosphoribosylformylglycinamidine cyclo-ligase.